The following is a 108-amino-acid chain: DNA-directed RNA polymerase III subunit RPC10 (108 aa).

The Zn(2+) site is built by C5, C8, C25, C28, C69, and C72. The segment at 5 to 28 (CPGCGNGLIVEEGQRCHRFACNTC) adopts a C4-type zinc-finger fold. Residues 65-107 (TAEPCPKCEHPRAYFMQLQTRYADEPMTTFYKCCNAQCGHRWR) form a TFIIS-type zinc finger. A Hairpin motif is present at residues 88–89 (DE). 2 residues coordinate Zn(2+): C98 and C102.

This sequence belongs to the archaeal RpoM/eukaryotic RPA12/RPB9/RPC11 RNA polymerase family. Component of the RNA polymerase III complex consisting of 17 subunits: a ten-subunit horseshoe-shaped catalytic core composed of POLR3A/RPC1, POLR3B/RPC2, POLR1C/RPAC1, POLR1D/RPAC2, POLR3K/RPC10, POLR2E/RPABC1, POLR2F/RPABC2, POLR2H/RPABC3, POLR2K/RPABC4 and POLR2L/RPABC5; a mobile stalk composed of two subunits POLR3H/RPC8 and CRCP/RPC9, protruding from the core and functioning primarily in transcription initiation; and additional subunits homologous to general transcription factors of the RNA polymerase II machinery, POLR3C/RPC3-POLR3F/RPC6-POLR3G/RPC7 heterotrimer required for transcription initiation and POLR3D/RPC4-POLR3E/RPC5 heterodimer involved in both transcription initiation and termination.

Its subcellular location is the nucleus. Its function is as follows. Core component of RNA polymerase III (Pol III) which synthesizes small non-coding RNAs using the four ribonucleoside triphosphates as substrates. Can mediate Pol I proofreading of the nascent RNA transcript. Anchors into the Pol III active site to constantly monitor transcription fidelity, cleaves mis-incorporated 5'-ribonucleotides and restarts the transcription process. Once Pol III reaches the poly(dT) termination signal, can induce Pol III clamp opening and transcription termination. Pol III plays an important role in sensing and limiting infection by intracellular bacteria and DNA viruses. Acts as a nuclear and cytosolic DNA sensor involved in innate immune response. Can sense non-self dsDNA that serves as template for transcription into dsRNA. The non-self RNA polymerase III transcripts, such as Epstein-Barr virus-encoded RNAs (EBERs) induce type I interferon and NF-kappa-B through the RIG-I pathway. The polypeptide is DNA-directed RNA polymerase III subunit RPC10 (POLR3K) (Bos taurus (Bovine)).